Here is a 395-residue protein sequence, read N- to C-terminus: Glyceraldehyde-3-phosphate dehydrogenase, testis-specific (395 aa).

Positions 1–60 (MSKRDIVLTNVTVVQLLRQPCPEPRVEAEPEPPAQPQPQPEPIKEEVPPPPPPPPAPKKV) are testis-specific N-terminal extension. The interval 19 to 59 (QPCPEPRVEAEPEPPAQPQPQPEPIKEEVPPPPPPPPAPKK) is disordered. Composition is skewed to pro residues over residues 31–41 (EPPAQPQPQPE) and 48–57 (PPPPPPPPAP). NAD(+) contacts are provided by residues 72-73 (RI), D93, and K138. Residues 210–212 (SCT), T241, 270–271 (TG), and R293 each bind D-glyceraldehyde 3-phosphate. C211 (nucleophile) is an active-site residue. N375 lines the NAD(+) pocket.

It belongs to the glyceraldehyde-3-phosphate dehydrogenase family. As to quaternary structure, homotetramer.

Its subcellular location is the cytoplasm. The catalysed reaction is D-glyceraldehyde 3-phosphate + phosphate + NAD(+) = (2R)-3-phospho-glyceroyl phosphate + NADH + H(+). The protein operates within carbohydrate degradation; glycolysis; pyruvate from D-glyceraldehyde 3-phosphate: step 1/5. In terms of biological role, may play an important role in regulating the switch between different pathways for energy production during spermiogenesis and in the spermatozoon. Required for sperm motility and male fertility. The sequence is that of Glyceraldehyde-3-phosphate dehydrogenase, testis-specific (GAPDHS) from Bos taurus (Bovine).